The chain runs to 838 residues: Extragenic suppressor of kinetochore protein 1 (838 aa).

Phosphoserine occurs at positions 411 and 418. Positions 411-468 (SDEDDDDSTFSDKNSKDFKETEDMNGAEDMHGRAPQITKDNLNLTTTDSPMSEAEPVS) are disordered. Phosphothreonine is present on threonine 419. Residues 423–442 (KNSKDFKETEDMNGAEDMHG) are compositionally biased toward basic and acidic residues. Residues serine 425, serine 459, serine 468, and serine 491 each carry the phosphoserine modification. Residues 448–460 (TKDNLNLTTTDSP) are compositionally biased toward polar residues. Phosphothreonine is present on threonine 493. Position 494 is a phosphoserine (serine 494). Over residues 690-700 (ELESNSSDDDV) the composition is skewed to acidic residues. Disordered regions lie at residues 690–745 (ELES…DQDN) and 757–838 (ISDN…NHGK). Residues serine 711 and serine 713 each carry the phosphoserine modification. The segment covering 714 to 723 (NDEDDGNDED) has biased composition (acidic residues). Residues 724–734 (PLSREMSRRLS) are compositionally biased toward basic and acidic residues. Composition is skewed to acidic residues over residues 768-779 (SDEDDDDDDEVV) and 806-818 (SDSE…DSSD).

The protein belongs to the SAPS family. In terms of assembly, interacts with ppe1 and mis12.

Its subcellular location is the nucleus. Has a role in chromosome segregation. May provide a dynamic connection between kinetochore microtubules and kinetochore chromatin. This chain is Extragenic suppressor of kinetochore protein 1 (ekc1), found in Schizosaccharomyces pombe (strain 972 / ATCC 24843) (Fission yeast).